The chain runs to 212 residues: Peptide methionine sulfoxide reductase MsrA (212 aa).

Residues 1–14 (MNSIDKTQRITQSD) show a composition bias toward polar residues. Positions 1-21 (MNSIDKTQRITQSDALPGRST) are disordered. C52 is a catalytic residue.

The protein belongs to the MsrA Met sulfoxide reductase family.

It carries out the reaction L-methionyl-[protein] + [thioredoxin]-disulfide + H2O = L-methionyl-(S)-S-oxide-[protein] + [thioredoxin]-dithiol. It catalyses the reaction [thioredoxin]-disulfide + L-methionine + H2O = L-methionine (S)-S-oxide + [thioredoxin]-dithiol. In terms of biological role, has an important function as a repair enzyme for proteins that have been inactivated by oxidation. Catalyzes the reversible oxidation-reduction of methionine sulfoxide in proteins to methionine. The chain is Peptide methionine sulfoxide reductase MsrA from Pectobacterium atrosepticum (strain SCRI 1043 / ATCC BAA-672) (Erwinia carotovora subsp. atroseptica).